The sequence spans 173 residues: PTS system glucose-specific EIIA component (173 aa).

A PTS EIIA type-1 domain is found at 40–144; the sequence is DPTFAQKMMG…STVTPVVVTN (105 aa). Positions 77 and 92 each coordinate Zn(2+). Histidine 92 acts as the Tele-phosphohistidine intermediate; for EIIA activity in catalysis. Phosphohistidine; by HPr is present on histidine 92.

Heterodimer with glycerol kinase (glpk). Zn(2+) is required as a cofactor.

The protein localises to the cytoplasm. In terms of biological role, the phosphoenolpyruvate-dependent sugar phosphotransferase system (sugar PTS), a major carbohydrate active transport system, catalyzes the phosphorylation of incoming sugar substrates concomitantly with their translocation across the cell membrane. The enzyme II complex composed of PtsG and Crr is involved in glucose transport. The chain is PTS system glucose-specific EIIA component (crr) from Halalkalibacterium halodurans (strain ATCC BAA-125 / DSM 18197 / FERM 7344 / JCM 9153 / C-125) (Bacillus halodurans).